The primary structure comprises 166 residues: Transcription antitermination protein NusB (166 aa).

A compositionally biased stretch (basic and acidic residues) spans 1–18; sequence MISDESDRFNPRDPKPAD. The interval 1 to 30 is disordered; that stretch reads MISDESDRFNPRDPKPADAGKPSKSAKRRE.

The protein belongs to the NusB family.

Functionally, involved in transcription antitermination. Required for transcription of ribosomal RNA (rRNA) genes. Binds specifically to the boxA antiterminator sequence of the ribosomal RNA (rrn) operons. The sequence is that of Transcription antitermination protein NusB from Pseudomonas entomophila (strain L48).